The sequence spans 517 residues: GMP synthase [glutamine-hydrolyzing] (517 aa).

The 192-residue stretch at 11-202 (KIIVLDYGSQ…AFDICKAEAN (192 aa)) folds into the Glutamine amidotransferase type-1 domain. Cys-88 acts as the Nucleophile in catalysis. Residues His-176 and Glu-178 contribute to the active site. The GMPS ATP-PPase domain maps to 203 to 392 (WSMDDFITKQ…LGMPHALVWR (190 aa)). 230–236 (SGGVDSS) is a binding site for ATP.

Homodimer.

The enzyme catalyses XMP + L-glutamine + ATP + H2O = GMP + L-glutamate + AMP + diphosphate + 2 H(+). Its pathway is purine metabolism; GMP biosynthesis; GMP from XMP (L-Gln route): step 1/1. Functionally, catalyzes the synthesis of GMP from XMP. In Lacticaseibacillus casei (strain BL23) (Lactobacillus casei), this protein is GMP synthase [glutamine-hydrolyzing].